The sequence spans 421 residues: MQDSIEQYMQAVGQQARKASRVLSSASTHTKNNALSAIYTALVNHEPEILAANAVDMQKGRDSHLDSALLDRLELTPTRFKGMLQGLKDVIALTDPIGEITDLAYRPSGIQLGKMRVPLGVIGMIYESRPNVTLEAASLALKSGNAIILRGGSEALQSNKAIATAIQHGLKVAGLPEHAIQVIETADRAAVGQLITMTEYVDVIVPRGGKSLIERISNEARIPVIKHLDGNCHVFIDVEADLHKALPIALNAKTHRYGVCNAMETLLVHEEIAEEFLPRIAELYAEKHVELRGCQETRRILGSSVKTATEEDWYTEYLAPILAIKVVEHIDQAIEHINKYGSHHTDAIVTENYSKVRKFLAEVDSSSVMINASTRFADGFEYGLGAEIGISTDKIHARGPVGLEGLTSQKWIVFGDGQIRH.

The protein belongs to the gamma-glutamyl phosphate reductase family.

It is found in the cytoplasm. It catalyses the reaction L-glutamate 5-semialdehyde + phosphate + NADP(+) = L-glutamyl 5-phosphate + NADPH + H(+). It functions in the pathway amino-acid biosynthesis; L-proline biosynthesis; L-glutamate 5-semialdehyde from L-glutamate: step 2/2. Its function is as follows. Catalyzes the NADPH-dependent reduction of L-glutamate 5-phosphate into L-glutamate 5-semialdehyde and phosphate. The product spontaneously undergoes cyclization to form 1-pyrroline-5-carboxylate. This is Gamma-glutamyl phosphate reductase from Acinetobacter baylyi (strain ATCC 33305 / BD413 / ADP1).